The primary structure comprises 298 residues: GTP cyclohydrolase FolE2 (298 aa).

This sequence belongs to the GTP cyclohydrolase IV family.

It catalyses the reaction GTP + H2O = 7,8-dihydroneopterin 3'-triphosphate + formate + H(+). The protein operates within cofactor biosynthesis; 7,8-dihydroneopterin triphosphate biosynthesis; 7,8-dihydroneopterin triphosphate from GTP: step 1/1. In terms of biological role, converts GTP to 7,8-dihydroneopterin triphosphate. This chain is GTP cyclohydrolase FolE2, found in Neisseria meningitidis serogroup C (strain 053442).